The following is a 1098-amino-acid chain: Probable DNA-directed RNA polymerase (1098 aa).

Residues 1–24 (PIRESVRVSTDRDPDLEDEKREQL) show a composition bias toward basic and acidic residues. The segment at 1–26 (PIRESVRVSTDRDPDLEDEKREQLGE) is disordered. Residues Asp663, Lys750, and Asp915 contribute to the active site.

It belongs to the phage and mitochondrial RNA polymerase family.

It is found in the mitochondrion. It catalyses the reaction RNA(n) + a ribonucleoside 5'-triphosphate = RNA(n+1) + diphosphate. In terms of biological role, DNA-dependent RNA polymerase catalyzes the transcription of DNA into RNA using the four ribonucleoside triphosphates as substrates. The polypeptide is Probable DNA-directed RNA polymerase (Zea mays (Maize)).